The following is a 279-amino-acid chain: Cytochrome c1 (279 aa).

The signal sequence occupies residues 1–21 (MKKLLISAVSALVLGSGAAFA). The heme c site is built by Cys55, Cys58, His59, and Met204. Residues 248–266 (MGLVAMVMLGLLSVMLYLT) traverse the membrane as a helical segment.

In terms of assembly, the main subunits of complex b-c1 are: cytochrome b, cytochrome c1 and the Rieske protein. In terms of processing, binds 1 heme c group covalently per subunit.

It is found in the cell membrane. Component of the ubiquinol-cytochrome c reductase complex (complex III or cytochrome b-c1 complex), which is a respiratory chain that generates an electrochemical potential coupled to ATP synthesis. c1 functions as an electron donor to cytochrome c. This chain is Cytochrome c1 (petC), found in Rhodobacter capsulatus (strain ATCC BAA-309 / NBRC 16581 / SB1003).